The following is a 440-amino-acid chain: Transposon Ty1-DR3 Gag polyprotein (440 aa).

Composition is skewed to polar residues over residues 1–10 (MESQQLSNYP), 48–60 (TKAN…TPAS), and 127–152 (QSQF…GNTF). 3 disordered regions span residues 1 to 93 (MESQ…MMTQ), 126 to 173 (PQSQ…RPPP), and 352 to 440 (GSRN…PETY). Residues 153–165 (TDSSSADSDMTST) are compositionally biased toward low complexity. The tract at residues 299-401 (NNGIHINNKV…NSKSKTARAH (103 aa)) is RNA-binding. The span at 402 to 428 (NVSTSINSPSTDNDSISKSTTEPIQLN) shows a compositional bias: polar residues. The residue at position 416 (S416) is a Phosphoserine. Basic and acidic residues predominate over residues 429-440 (NKHDLHLRPETY).

As to quaternary structure, homotrimer.

The protein localises to the cytoplasm. Functionally, capsid protein (CA) is the structural component of the virus-like particle (VLP), forming the shell that encapsulates the retrotransposons dimeric RNA genome. The particles are assembled from trimer-clustered units and there are holes in the capsid shells that allow for the diffusion of macromolecules. CA also has nucleocapsid-like chaperone activity, promoting primer tRNA(i)-Met annealing to the multipartite primer-binding site (PBS), dimerization of Ty1 RNA and initiation of reverse transcription. The polypeptide is Transposon Ty1-DR3 Gag polyprotein (TY1A-DR3) (Saccharomyces cerevisiae (strain ATCC 204508 / S288c) (Baker's yeast)).